Consider the following 476-residue polypeptide: Cysteine--tRNA ligase (476 aa).

Cys31 lines the Zn(2+) pocket. The short motif at 33–43 (PTVYNYAHIGN) is the 'HIGH' region element. Residues Cys211, His236, and Glu240 each contribute to the Zn(2+) site. The short motif at 269–273 (KMSKS) is the 'KMSKS' region element. Lys272 is an ATP binding site.

The protein belongs to the class-I aminoacyl-tRNA synthetase family. In terms of assembly, monomer. Zn(2+) is required as a cofactor.

The protein resides in the cytoplasm. The catalysed reaction is tRNA(Cys) + L-cysteine + ATP = L-cysteinyl-tRNA(Cys) + AMP + diphosphate. In Xanthomonas axonopodis pv. citri (strain 306), this protein is Cysteine--tRNA ligase.